The chain runs to 300 residues: Haloalkane dehalogenase (300 aa).

The 124-residue stretch at alanine 32–phenylalanine 155 folds into the AB hydrolase-1 domain. Aspartate 109 functions as the Nucleophile in the catalytic mechanism. The active-site Proton donor is the glutamate 133. Histidine 273 (proton acceptor) is an active-site residue.

Belongs to the haloalkane dehalogenase family. Type 2 subfamily. As to quaternary structure, monomer.

It carries out the reaction 1-haloalkane + H2O = a halide anion + a primary alcohol + H(+). In terms of biological role, catalyzes hydrolytic cleavage of carbon-halogen bonds in halogenated aliphatic compounds, leading to the formation of the corresponding primary alcohols, halide ions and protons. This chain is Haloalkane dehalogenase, found in Mycobacterium tuberculosis (strain ATCC 25177 / H37Ra).